Consider the following 268-residue polypeptide: Tryptophan synthase alpha chain (268 aa).

Active-site proton acceptor residues include Glu49 and Asp60.

The protein belongs to the TrpA family. In terms of assembly, tetramer of two alpha and two beta chains.

The catalysed reaction is (1S,2R)-1-C-(indol-3-yl)glycerol 3-phosphate + L-serine = D-glyceraldehyde 3-phosphate + L-tryptophan + H2O. It functions in the pathway amino-acid biosynthesis; L-tryptophan biosynthesis; L-tryptophan from chorismate: step 5/5. In terms of biological role, the alpha subunit is responsible for the aldol cleavage of indoleglycerol phosphate to indole and glyceraldehyde 3-phosphate. The polypeptide is Tryptophan synthase alpha chain (Escherichia coli O17:K52:H18 (strain UMN026 / ExPEC)).